A 237-amino-acid chain; its full sequence is tRNA-splicing endonuclease subunit Sen2-1 (237 aa).

Active-site residues include Y148, H156, and K190.

It belongs to the tRNA-intron endonuclease family. TRNA splicing endonuclease is a heterotetramer composed of SEN2, SEN15, SEN34/LENG5 and SEN54.

It is found in the nucleus. It carries out the reaction pretRNA = a 3'-half-tRNA molecule with a 5'-OH end + a 5'-half-tRNA molecule with a 2',3'-cyclic phosphate end + an intron with a 2',3'-cyclic phosphate and a 5'-hydroxyl terminus.. Functionally, constitutes one of the two catalytic subunit of the tRNA-splicing endonuclease complex, a complex responsible for identification and cleavage of the splice sites in pre-tRNA. It cleaves pre-tRNA at the 5'- and 3'-splice sites to release the intron. The products are an intron and two tRNA half-molecules bearing 2',3'-cyclic phosphate and 5'-OH termini. There are no conserved sequences at the splice sites, but the intron is invariably located at the same site in the gene, placing the splice sites an invariant distance from the constant structural features of the tRNA body. Probably carries the active site for 5'-splice site cleavage. This chain is tRNA-splicing endonuclease subunit Sen2-1 (SEN1), found in Arabidopsis thaliana (Mouse-ear cress).